A 198-amino-acid polypeptide reads, in one-letter code: Large ribosomal subunit protein bL27c (198 aa).

A chloroplast-targeting transit peptide spans 1 to 58 (MAMATSMSLNLIGAFKGLSLSSTSSFLRGDLSFSPKTSFTVTLPLENLQAPIPLTIES).

It belongs to the bacterial ribosomal protein bL27 family. Part of the 50S ribosomal subunit.

The protein resides in the plastid. The protein localises to the chloroplast. The protein is Large ribosomal subunit protein bL27c (RPL27) of Arabidopsis thaliana (Mouse-ear cress).